The following is a 181-amino-acid chain: Adenine phosphoribosyltransferase (181 aa).

Belongs to the purine/pyrimidine phosphoribosyltransferase family. Homodimer.

It localises to the cytoplasm. The enzyme catalyses AMP + diphosphate = 5-phospho-alpha-D-ribose 1-diphosphate + adenine. It functions in the pathway purine metabolism; AMP biosynthesis via salvage pathway; AMP from adenine: step 1/1. Catalyzes a salvage reaction resulting in the formation of AMP, that is energically less costly than de novo synthesis. The protein is Adenine phosphoribosyltransferase of Vibrio cholerae serotype O1 (strain ATCC 39541 / Classical Ogawa 395 / O395).